Consider the following 137-residue polypeptide: Large ribosomal subunit protein uL16 (137 aa).

It belongs to the universal ribosomal protein uL16 family. Part of the 50S ribosomal subunit.

Functionally, binds 23S rRNA and is also seen to make contacts with the A and possibly P site tRNAs. The protein is Large ribosomal subunit protein uL16 of Spiroplasma kunkelii.